An 877-amino-acid chain; its full sequence is MDGPNSDRAHDRHAFDRVAACKARIQHNTAELAERFRTGTPVADLIRERTAFIDHLLSEAWDRRIGRGATDVALVAVGGYGRGELLLHSDVDLLILLDEAAPSSRKQDLSDFLRLLWDIGLKPGHSVRSPAECAEAARTDQTIITNLLEGRLLVGSAALWEAVRSETAPERMWSSAAFFEAKMAEQRIRYSKYHNTAYNLEPNVKEGPGGLRDIQLIGWIIRRHSDARGLQDLVAHGWLTDAEYRELKEAQAFLWRIRFALHALTGRCEDRLLFDYQRELAGLFGYRGETSNEVVEGFMQDYFRTVTGVERLNELLLQLFNEAVLHRDDAFSPTPVNDHFQAVNDYLEAVHPAVFREHPLALLEVFLILQKNSALEGVRAATIRLIRQHIHLIDDAFRNDPEACRLFMDILRQPGGVTHQLRRMNRYGVLAAYLPEFGRVVGRMQYDLFHVYTVDEHTLFVVRNLRRFALEEFQQENPLCYELFQLIEKPELLYIAALMHDIAKGSDGDHSEVGERIAEEFCRRHRIGPRETLLVKWLVRHHLVMSMTAQRKDLSDPEVIHEFAQIVRNQNTLNHLYLLTVADIRATNPSLWNSWKGALLQELYTSTSWTLRRGLDTPPDYAEQISAAKDEARTLLQRFGLAEDAITAVWENIGDDYFLRFLPEEIAWHTTAIAACRPEHLPLVLLRPESLRGSVEVFIYERNRDFLFAQTTAVLDQLGLTVLDAKIIASRQGFALLSFNVLERSGTAPEGLFRLVQICDRLKEALSGGGAPPPAVSRLATRQIRHFTVPTKVFFHDDPQNRFSILELIATDRPGLLSKVGQAFMRTGIRLHNAKISTVGSRAEDIFFITDREDRPLDGEADRAALRRVLIEFVGDQ.

The interval 1–335 (MDGPNSDRAH…HRDDAFSPTP (335 aa)) is uridylyltransferase. A uridylyl-removing region spans residues 336–695 (VNDHFQAVND…LRPESLRGSV (360 aa)). The 123-residue stretch at 454–576 (VDEHTLFVVR…VRNQNTLNHL (123 aa)) folds into the HD domain. ACT domains follow at residues 696–778 (EVFI…AVSR) and 805–877 (ILEL…VGDQ).

Belongs to the GlnD family. Mg(2+) serves as cofactor.

The enzyme catalyses [protein-PII]-L-tyrosine + UTP = [protein-PII]-uridylyl-L-tyrosine + diphosphate. It catalyses the reaction [protein-PII]-uridylyl-L-tyrosine + H2O = [protein-PII]-L-tyrosine + UMP + H(+). With respect to regulation, uridylyltransferase (UTase) activity is inhibited by glutamine, while glutamine activates uridylyl-removing (UR) activity. In terms of biological role, modifies, by uridylylation and deuridylylation, the PII regulatory proteins (GlnB and homologs), in response to the nitrogen status of the cell that GlnD senses through the glutamine level. Under low glutamine levels, catalyzes the conversion of the PII proteins and UTP to PII-UMP and PPi, while under higher glutamine levels, GlnD hydrolyzes PII-UMP to PII and UMP (deuridylylation). Thus, controls uridylylation state and activity of the PII proteins, and plays an important role in the regulation of nitrogen fixation and metabolism. In Methylococcus capsulatus (strain ATCC 33009 / NCIMB 11132 / Bath), this protein is Bifunctional uridylyltransferase/uridylyl-removing enzyme.